Reading from the N-terminus, the 160-residue chain is Cytochrome b6-f complex subunit 4 (160 aa).

3 helical membrane passes run 36–56, 95–115, and 128–148; these read LLYI…GLAV, LLGI…PFIE, and IAMA…IGAC.

This sequence belongs to the cytochrome b family. PetD subfamily. The 4 large subunits of the cytochrome b6-f complex are cytochrome b6, subunit IV (17 kDa polypeptide, PetD), cytochrome f and the Rieske protein, while the 4 small subunits are PetG, PetL, PetM and PetN. The complex functions as a dimer.

The protein resides in the cellular thylakoid membrane. Its function is as follows. Component of the cytochrome b6-f complex, which mediates electron transfer between photosystem II (PSII) and photosystem I (PSI), cyclic electron flow around PSI, and state transitions. The polypeptide is Cytochrome b6-f complex subunit 4 (Prochlorococcus marinus (strain MIT 9303)).